Here is a 604-residue protein sequence, read N- to C-terminus: Elongation factor 4 (604 aa).

The 183-residue stretch at K8–N190 folds into the tr-type G domain. GTP is bound by residues D20 to T25 and N137 to D140.

It belongs to the TRAFAC class translation factor GTPase superfamily. Classic translation factor GTPase family. LepA subfamily.

The protein resides in the cell inner membrane. The enzyme catalyses GTP + H2O = GDP + phosphate + H(+). In terms of biological role, required for accurate and efficient protein synthesis under certain stress conditions. May act as a fidelity factor of the translation reaction, by catalyzing a one-codon backward translocation of tRNAs on improperly translocated ribosomes. Back-translocation proceeds from a post-translocation (POST) complex to a pre-translocation (PRE) complex, thus giving elongation factor G a second chance to translocate the tRNAs correctly. Binds to ribosomes in a GTP-dependent manner. The sequence is that of Elongation factor 4 from Fusobacterium nucleatum subsp. nucleatum (strain ATCC 25586 / DSM 15643 / BCRC 10681 / CIP 101130 / JCM 8532 / KCTC 2640 / LMG 13131 / VPI 4355).